A 294-amino-acid chain; its full sequence is Fatty acyl-CoA reductase Rv0547c (294 aa).

11 residues coordinate NADP(+): Ser49, Ser50, Ile52, Arg72, Asp97, Leu98, Asn124, Tyr192, Lys196, Val225, and Thr227. The Proton acceptor role is filled by Tyr192.

The protein belongs to the short-chain dehydrogenases/reductases (SDR) family.

It is found in the host mitochondrion. The catalysed reaction is hexadecanal + NADP(+) + CoA = hexadecanoyl-CoA + NADPH + H(+). Oxidoreductase that promotes the persistence of M.tuberculosis in host macrophages by reprogramming the fatty acid metabolism in host mitochondria. When localized in the host mitochondria, it potentially acts on unknown lipid substrates and converts them into products that directly or indirectly alter the lipid profile of the mitochondria. This change in lipid profile results in increased mitochondrial membrane fluidity, enhanced endogenous fatty acid oxidation and increased mitochondrial spare respiratory capacity. All these events eventually favor M.tuberculosis persistence in the host macrophages. In vitro, can catalyze the NADPH-dependent reduction of palmitoyl-CoA (hexadecanoyl-CoA). The sequence is that of Fatty acyl-CoA reductase Rv0547c from Mycobacterium tuberculosis (strain ATCC 25618 / H37Rv).